Consider the following 499-residue polypeptide: Probable cytosol aminopeptidase (499 aa).

The Mn(2+) site is built by lysine 267 and aspartate 272. Lysine 279 is an active-site residue. Mn(2+) is bound by residues aspartate 290, aspartate 349, and glutamate 351. Residue arginine 353 is part of the active site.

Belongs to the peptidase M17 family. It depends on Mn(2+) as a cofactor.

The protein localises to the cytoplasm. It carries out the reaction Release of an N-terminal amino acid, Xaa-|-Yaa-, in which Xaa is preferably Leu, but may be other amino acids including Pro although not Arg or Lys, and Yaa may be Pro. Amino acid amides and methyl esters are also readily hydrolyzed, but rates on arylamides are exceedingly low.. The catalysed reaction is Release of an N-terminal amino acid, preferentially leucine, but not glutamic or aspartic acids.. Functionally, presumably involved in the processing and regular turnover of intracellular proteins. Catalyzes the removal of unsubstituted N-terminal amino acids from various peptides. This chain is Probable cytosol aminopeptidase, found in Buchnera aphidicola subsp. Acyrthosiphon pisum (strain Tuc7).